A 172-amino-acid polypeptide reads, in one-letter code: Large ribosomal subunit protein uL10 (172 aa).

This sequence belongs to the universal ribosomal protein uL10 family. As to quaternary structure, part of the ribosomal stalk of the 50S ribosomal subunit. The N-terminus interacts with L11 and the large rRNA to form the base of the stalk. The C-terminus forms an elongated spine to which L12 dimers bind in a sequential fashion forming a multimeric L10(L12)X complex.

Forms part of the ribosomal stalk, playing a central role in the interaction of the ribosome with GTP-bound translation factors. This is Large ribosomal subunit protein uL10 from Chlorobium phaeovibrioides (strain DSM 265 / 1930) (Prosthecochloris vibrioformis (strain DSM 265)).